The sequence spans 278 residues: MSLALNPVAFNLGPIQVKWYGILMATGVLVATLMAINEGKKRQIMPDDFIDFLLWAVPIGFIGARIYYVVFEWGYFSQHPDQIIAIWNGGIAIYGGLIAGLIVLLVFCHQRMLPPFLMLDIIAPGVMAAQVIARWGNFMNQEAHGAKTTLSFLESLHLPHFIIQQMYIDGSYYQPTYLYESALNLVGLILILSLRHRKHLFKRGEVFFSYVIWYAAVRFFVEGMRTDSLYIANTIRVSQALSLILFFGAIILWVYRRKVIKPKWYLAGSGLKYPYNRD.

4 consecutive transmembrane segments (helical) span residues 19 to 39 (WYGI…INEG), 49 to 69 (FIDF…IYYV), 83 to 103 (IIAI…GLIV), and 112 to 132 (MLPP…AQVI). A 1,2-diacyl-sn-glycero-3-phospho-(1'-sn-glycerol) is bound at residue arginine 134. 3 helical membrane passes run 174 to 194 (QPTY…ILSL), 204 to 224 (GEVF…VEGM), and 235 to 255 (IRVS…LWVY).

The protein belongs to the Lgt family.

Its subcellular location is the cell membrane. It catalyses the reaction L-cysteinyl-[prolipoprotein] + a 1,2-diacyl-sn-glycero-3-phospho-(1'-sn-glycerol) = an S-1,2-diacyl-sn-glyceryl-L-cysteinyl-[prolipoprotein] + sn-glycerol 1-phosphate + H(+). The protein operates within protein modification; lipoprotein biosynthesis (diacylglyceryl transfer). Catalyzes the transfer of the diacylglyceryl group from phosphatidylglycerol to the sulfhydryl group of the N-terminal cysteine of a prolipoprotein, the first step in the formation of mature lipoproteins. The sequence is that of Phosphatidylglycerol--prolipoprotein diacylglyceryl transferase from Lactobacillus gasseri (strain ATCC 33323 / DSM 20243 / BCRC 14619 / CIP 102991 / JCM 1131 / KCTC 3163 / NCIMB 11718 / NCTC 13722 / AM63).